The sequence spans 231 residues: Ribose-5-phosphate isomerase A (231 aa).

Substrate contacts are provided by residues 32–35 (TGST), 85–88 (DGAD), and 98–101 (KGGG). E107 functions as the Proton acceptor in the catalytic mechanism. Residue K125 coordinates substrate.

This sequence belongs to the ribose 5-phosphate isomerase family. As to quaternary structure, homodimer.

It catalyses the reaction aldehydo-D-ribose 5-phosphate = D-ribulose 5-phosphate. The protein operates within carbohydrate degradation; pentose phosphate pathway; D-ribose 5-phosphate from D-ribulose 5-phosphate (non-oxidative stage): step 1/1. Catalyzes the reversible conversion of ribose-5-phosphate to ribulose 5-phosphate. This is Ribose-5-phosphate isomerase A from Paraburkholderia phymatum (strain DSM 17167 / CIP 108236 / LMG 21445 / STM815) (Burkholderia phymatum).